A 327-amino-acid polypeptide reads, in one-letter code: AA9 family lytic polysaccharide monooxygenase G (327 aa).

An N-terminal signal peptide occupies residues 1-20 (MKLNLASLCFLASIAPLVSG). Positions 21 and 96 each coordinate Cu(2+). An intrachain disulfide couples C62 to C185. H172 lines the O2 pocket. Y182 is a Cu(2+) binding site. The N-linked (GlcNAc...) asparagine glycan is linked to N290. In terms of domain architecture, CBM1 spans 291–327 (GTIKKYYQCGGQGWTGSGSCEAGTSCREWNTWYFQCV).

The protein belongs to the polysaccharide monooxygenase AA9 family. Cu(2+) is required as a cofactor.

It localises to the secreted. It catalyses the reaction [(1-&gt;4)-beta-D-glucosyl]n+m + reduced acceptor + O2 = 4-dehydro-beta-D-glucosyl-[(1-&gt;4)-beta-D-glucosyl]n-1 + [(1-&gt;4)-beta-D-glucosyl]m + acceptor + H2O.. Lytic polysaccharide monooxygenase (LPMO) that depolymerizes crystalline and amorphous polysaccharides via the oxidation of scissile alpha- or beta-(1-4)-glycosidic bonds, yielding C1 or C4 oxidation products. Catalysis by LPMOs requires the reduction of the active-site copper from Cu(II) to Cu(I) by a reducing agent and H(2)O(2) or O(2) as a cosubstrate. This is AA9 family lytic polysaccharide monooxygenase G from Aspergillus tamarii.